The sequence spans 83 residues: Small ribosomal subunit protein eS21 (83 aa).

This sequence belongs to the eukaryotic ribosomal protein eS21 family. As to quaternary structure, component of the 40S small ribosomal subunit. Interacts with sta.

It localises to the cytoplasm. Its subcellular location is the cytosol. It is found in the rough endoplasmic reticulum. Functionally, may be an associated component of the ribosome rather than a core structural subunit. May act as a translation initiation factor. Has a role in regulation of cell proliferation in the hematopoietic organs and the imaginal disks of larva. This chain is Small ribosomal subunit protein eS21 (RpS21), found in Drosophila simulans (Fruit fly).